A 446-amino-acid polypeptide reads, in one-letter code: tRNA modification GTPase MnmE (446 aa).

Positions 24, 81, and 120 each coordinate (6S)-5-formyl-5,6,7,8-tetrahydrofolate. Residues 216-368 (GLHAVLIGPP…LHTRLRELAL (153 aa)) form the TrmE-type G domain. Asparagine 226 contacts K(+). GTP-binding positions include 226–231 (NAGKSS), 245–251 (TDVAGTT), and 270–273 (DTAG). Serine 230 contributes to the Mg(2+) binding site. Positions 245, 247, and 250 each coordinate K(+). A Mg(2+)-binding site is contributed by threonine 251. Lysine 446 contacts (6S)-5-formyl-5,6,7,8-tetrahydrofolate.

Belongs to the TRAFAC class TrmE-Era-EngA-EngB-Septin-like GTPase superfamily. TrmE GTPase family. Homodimer. Heterotetramer of two MnmE and two MnmG subunits. The cofactor is K(+).

The protein resides in the cytoplasm. Exhibits a very high intrinsic GTPase hydrolysis rate. Involved in the addition of a carboxymethylaminomethyl (cmnm) group at the wobble position (U34) of certain tRNAs, forming tRNA-cmnm(5)s(2)U34. The sequence is that of tRNA modification GTPase MnmE from Xanthomonas campestris pv. campestris (strain B100).